A 377-amino-acid polypeptide reads, in one-letter code: GDP-mannose 3,5-epimerase (377 aa).

Gly-2 carries the post-translational modification N-acetylglycine. NAD(+) contacts are provided by residues 34–60 (GAGG…SDWK), Asp-58, and Asp-78. Substrate is bound by residues Gly-103 and 143 to 145 (SAC). Residues Tyr-174 and Lys-178 each contribute to the NAD(+) site. Tyr-174 serves as the catalytic Proton acceptor. Substrate is bound by residues Asn-203, 216–218 (EKA), Lys-225, 241–243 (QTR), Arg-306, and Ser-356. Ser-369 is modified (phosphoserine).

Belongs to the NAD(P)-dependent epimerase/dehydratase family. Homodimer. Interacts with chaperone Hsc70-3 protein, which may regulate epimerase activity. NAD(+) is required as a cofactor.

It catalyses the reaction GDP-alpha-D-mannose = GDP-beta-L-gulose. It carries out the reaction GDP-beta-L-gulose = GDP-beta-L-galactose. It participates in cofactor biosynthesis; L-ascorbate biosynthesis via GDP-alpha-D-mannose pathway; L-ascorbate from GDP-alpha-D-mannose: step 1/5. Inhibited by GDP and GDP-D-glucose. Functionally, catalyzes a reversible epimerization of GDP-D-mannose that precedes the committed step in the biosynthesis of vitamin C (L-ascorbate), resulting in the hydrolysis of the highly energetic glycosyl-pyrophosphoryl linkage. Able to catalyze 2 distinct epimerization reactions and can release both GDP-L-galactose and GDP-L-gulose from GDP-mannose. The polypeptide is GDP-mannose 3,5-epimerase (Arabidopsis thaliana (Mouse-ear cress)).